The sequence spans 371 residues: Vasopressin V2 receptor (371 aa).

Residues 1–30 are disordered; that stretch reads MLMASTTSAVPGHPSLPSLPSNSSQERPLD. Topologically, residues 1–38 are extracellular; sequence MLMASTTSAVPGHPSLPSLPSNSSQERPLDTRDPLLAR. Over residues 15 to 24 the composition is skewed to low complexity; that stretch reads SLPSLPSNSS. N-linked (GlcNAc...) asparagine glycosylation is present at Asn-22. Residues 39–63 form a helical membrane-spanning segment; the sequence is AELALLSIVFVAVALSNGLVLAALA. At 64 to 77 the chain is on the cytoplasmic side; sequence RRGRRGHWAPIHVF. A helical transmembrane segment spans residues 78-98; sequence IGHLCLADLAVALFQVLPQLA. The Extracellular portion of the chain corresponds to 99–113; it reads WKATDRFRGPDALCR. Residues 114-135 form a helical membrane-spanning segment; the sequence is AVKYLQMVGMYASSYMILAMTL. The Cytoplasmic segment spans residues 136–159; sequence DRHRAICRPMLAYRHGSGAHWNRP. The helical transmembrane segment at 160-180 threads the bilayer; sequence VLVAWAFSLLLSLPQLFIFAQ. Over 181–200 the chain is Extracellular; it reads RNVEGGSGVTDCWACFAEPW. Residues 201 to 220 traverse the membrane as a helical segment; that stretch reads GRRTYVTWIALMVFVAPTLG. Over 221-271 the chain is Cytoplasmic; the sequence is IAACQVLIFREIHASLVPGPSERPGGRRRGRRTGSPGEGAHVSAAVAKTVR. A disordered region spans residues 240–259; sequence PSERPGGRRRGRRTGSPGEG. A helical transmembrane segment spans residues 272 to 293; that stretch reads MTLVIVVVYVLCWAPFFLVQLW. Over 294–308 the chain is Extracellular; it reads AAWDPEAPLEGAPFV. A helical membrane pass occupies residues 309-328; that stretch reads LLMLLASLNSCTNPWIYASF. Over 329–371 the chain is Cytoplasmic; it reads SSSVSSELRSLLCCARGRTPPSLGPQDESCTTASSSLAKDTSS. S-palmitoyl cysteine attachment occurs at residues Cys-341 and Cys-342. The disordered stretch occupies residues 349–371; it reads PSLGPQDESCTTASSSLAKDTSS. The segment covering 356–371 has biased composition (polar residues); the sequence is ESCTTASSSLAKDTSS.

Belongs to the G-protein coupled receptor 1 family. Vasopressin/oxytocin receptor subfamily. In terms of assembly, interacts with ARRDC4. Identified in a complex containing at least ARRDC4, V2R and HGS. Interacts with TMEM147. As to expression, kidney.

The protein resides in the cell membrane. Functionally, receptor for arginine vasopressin. The activity of this receptor is mediated by G proteins which activate adenylate cyclase. Involved in renal water reabsorption. The chain is Vasopressin V2 receptor (AVPR2) from Homo sapiens (Human).